The following is a 288-amino-acid chain: Octanoyl-[GcvH]:protein N-octanoyltransferase (288 aa).

The BPL/LPL catalytic domain maps to 44 to 253 (AGGPPTFRLW…VLESAMGPQV (210 aa)). Cysteine 148 (acyl-thioester intermediate) is an active-site residue. The interval 269–288 (GREGASETDPRRVAYGVDRP) is disordered. Residues 272–288 (GASETDPRRVAYGVDRP) are compositionally biased toward basic and acidic residues.

This sequence belongs to the octanoyltransferase LipL family.

The enzyme catalyses N(6)-octanoyl-L-lysyl-[glycine-cleavage complex H protein] + L-lysyl-[lipoyl-carrier protein] = N(6)-octanoyl-L-lysyl-[lipoyl-carrier protein] + L-lysyl-[glycine-cleavage complex H protein]. Its pathway is protein modification; protein lipoylation via endogenous pathway; protein N(6)-(lipoyl)lysine from octanoyl-[acyl-carrier-protein]. Functionally, catalyzes the amidotransfer (transamidation) of the octanoyl moiety from octanoyl-GcvH to the lipoyl domain of the E2 subunit of lipoate-dependent enzymes. This Kyrpidia tusciae (strain DSM 2912 / NBRC 15312 / T2) (Bacillus tusciae) protein is Octanoyl-[GcvH]:protein N-octanoyltransferase.